Consider the following 404-residue polypeptide: Serine/threonine transporter SstT (404 aa).

8 helical membrane passes run 17–37, 39–59, 75–95, 138–158, 179–199, 212–232, 287–307, and 313–333; these read IGIGVVIGVMLGILAPDLTGF, ILGKLFVGGLKAIAPLLVFAL, MTLIIVLYLFGTFASALVAVL, ALATANYIGVLSWAIIFGLAL, IVVWIINLAPIGIMSLVFTTI, FLILVLVGTMVFVALVVNPLI, IPLGATINMGGAAITINVLTL, and FGIPIDFLTALLLSVVAAVSA.

It belongs to the dicarboxylate/amino acid:cation symporter (DAACS) (TC 2.A.23) family.

It is found in the cell membrane. The enzyme catalyses L-serine(in) + Na(+)(in) = L-serine(out) + Na(+)(out). The catalysed reaction is L-threonine(in) + Na(+)(in) = L-threonine(out) + Na(+)(out). Involved in the import of serine and threonine into the cell, with the concomitant import of sodium (symport system). This chain is Serine/threonine transporter SstT, found in Streptococcus pyogenes serotype M12 (strain MGAS2096).